Consider the following 370-residue polypeptide: Cobalt-precorrin-5B C(1)-methyltransferase (370 aa).

The protein belongs to the CbiD family.

The enzyme catalyses Co-precorrin-5B + S-adenosyl-L-methionine = Co-precorrin-6A + S-adenosyl-L-homocysteine. The protein operates within cofactor biosynthesis; adenosylcobalamin biosynthesis; cob(II)yrinate a,c-diamide from sirohydrochlorin (anaerobic route): step 6/10. Functionally, catalyzes the methylation of C-1 in cobalt-precorrin-5B to form cobalt-precorrin-6A. The polypeptide is Cobalt-precorrin-5B C(1)-methyltransferase (Pseudomonas syringae pv. tomato (strain ATCC BAA-871 / DC3000)).